The following is a 165-amino-acid chain: MDIAHDLQSIGAQEQALVFPHFDPARAWALGNRMHALATSRGHAIAIDIVTFGQPLFYAALAGATPDNADWVRRKRNVVAHFRRSSYAIGLRMQQAGATLADKHGLPIAEYSPHGGSFPLTVAGAGVIGSITASGLPQRADHEFVVEALCAELGHDYAVLALARS.

This sequence belongs to the UPF0303 family.

This Burkholderia lata (strain ATCC 17760 / DSM 23089 / LMG 22485 / NCIMB 9086 / R18194 / 383) protein is UPF0303 protein Bcep18194_A4700.